The sequence spans 122 residues: Small ribosomal subunit protein uS13 (122 aa).

Residues 93–122 (RRGLPVRGQRTKTNARTRKGPKKTIAGKKK) are disordered.

This sequence belongs to the universal ribosomal protein uS13 family. In terms of assembly, part of the 30S ribosomal subunit. Forms a loose heterodimer with protein S19. Forms two bridges to the 50S subunit in the 70S ribosome.

Its function is as follows. Located at the top of the head of the 30S subunit, it contacts several helices of the 16S rRNA. In the 70S ribosome it contacts the 23S rRNA (bridge B1a) and protein L5 of the 50S subunit (bridge B1b), connecting the 2 subunits; these bridges are implicated in subunit movement. Contacts the tRNAs in the A and P-sites. This is Small ribosomal subunit protein uS13 from Corynebacterium jeikeium (strain K411).